Consider the following 160-residue polypeptide: Lipoprotein signal peptidase (160 aa).

The next 2 helical transmembrane spans lie at 60–80 (TEWLIAASCLGVILALTAFFL) and 84–104 (LPFLDTRPGVAALGIILAGTI). Residues aspartate 118 and aspartate 132 contribute to the active site. The chain crosses the membrane as a helical span at residues 127 to 147 (TFNMADSCLTLGIIWLVLLYL).

This sequence belongs to the peptidase A8 family.

It is found in the cell membrane. It carries out the reaction Release of signal peptides from bacterial membrane prolipoproteins. Hydrolyzes -Xaa-Yaa-Zaa-|-(S,diacylglyceryl)Cys-, in which Xaa is hydrophobic (preferably Leu), and Yaa (Ala or Ser) and Zaa (Gly or Ala) have small, neutral side chains.. Its pathway is protein modification; lipoprotein biosynthesis (signal peptide cleavage). This protein specifically catalyzes the removal of signal peptides from prolipoproteins. The polypeptide is Lipoprotein signal peptidase (Dehalococcoides mccartyi (strain ATCC BAA-2266 / KCTC 15142 / 195) (Dehalococcoides ethenogenes (strain 195))).